Consider the following 126-residue polypeptide: Fluoride-specific ion channel FluC (126 aa).

4 consecutive transmembrane segments (helical) span residues 4–24 (LLLVCLGGALGSGARYLTSAW), 36–56 (GTLLVNVSGSFLLAGIMTASL), 67–85 (LFLAAGVMGGFTTYSSFNY), and 101–121 (AYLLATVVGCLVAAFAATLLV). 2 residues coordinate Na(+): glycine 75 and threonine 78.

The protein belongs to the fluoride channel Fluc/FEX (TC 1.A.43) family.

Its subcellular location is the cell inner membrane. It catalyses the reaction fluoride(in) = fluoride(out). Its activity is regulated as follows. Na(+) is not transported, but it plays an essential structural role and its presence is essential for fluoride channel function. Fluoride-specific ion channel. Important for reducing fluoride concentration in the cell, thus reducing its toxicity. This Anaeromyxobacter sp. (strain K) protein is Fluoride-specific ion channel FluC.